Here is a 393-residue protein sequence, read N- to C-terminus: Digeranylgeranylglycerophospholipid reductase (393 aa).

9 residues coordinate FAD: Ala13, Asp32, Cys43, Ala44, Gly46, Arg95, Val119, Asp274, and Gly286. The a 2,3-bis-O-(geranylgeranyl)-sn-glycerol 1-phospholipid site is built by Arg327 and Gly363.

Belongs to the geranylgeranyl reductase family. DGGGPL reductase subfamily. Requires FAD as cofactor.

It carries out the reaction a 2,3-bis-O-phytanyl-sn-glycerol 1-phospholipid + 8 A = a 2,3-bis-O-(geranylgeranyl)-sn-glycerol 1-phospholipid + 8 AH2. The catalysed reaction is 2,3-bis-O-(phytanyl)-sn-glycerol 1-phosphate + 8 A = 2,3-bis-O-(geranylgeranyl)-sn-glycerol 1-phosphate + 8 AH2. It catalyses the reaction CDP-2,3-bis-O-(geranylgeranyl)-sn-glycerol + 8 AH2 = CDP-2,3-bis-O-(phytanyl)-sn-glycerol + 8 A. The enzyme catalyses archaetidylserine + 8 AH2 = 2,3-bis-O-phytanyl-sn-glycero-3-phospho-L-serine + 8 A. It participates in membrane lipid metabolism; glycerophospholipid metabolism. Functionally, is involved in the reduction of 2,3-digeranylgeranylglycerophospholipids (unsaturated archaeols) into 2,3-diphytanylglycerophospholipids (saturated archaeols) in the biosynthesis of archaeal membrane lipids. Catalyzes the formation of archaetidic acid (2,3-di-O-phytanyl-sn-glyceryl phosphate) from 2,3-di-O-geranylgeranylglyceryl phosphate (DGGGP) via the hydrogenation of each double bond of the isoprenoid chains. Is also probably able to reduce double bonds of geranyl groups in CDP-2,3-bis-O-(geranylgeranyl)-sn-glycerol and archaetidylserine, thus acting at various stages in the biosynthesis of archaeal membrane lipids. The chain is Digeranylgeranylglycerophospholipid reductase from Pyrococcus horikoshii (strain ATCC 700860 / DSM 12428 / JCM 9974 / NBRC 100139 / OT-3).